We begin with the raw amino-acid sequence, 356 residues long: 3-isopropylmalate dehydrogenase (356 aa).

Substrate-binding residues include arginine 91, arginine 101, arginine 129, and aspartate 223. Mg(2+) is bound by residues aspartate 223, aspartate 247, and aspartate 251. 281–293 is an NAD(+) binding site; it reads GSAPDIAGKGIAN.

The protein belongs to the isocitrate and isopropylmalate dehydrogenases family. LeuB type 1 subfamily. As to quaternary structure, homodimer. Mg(2+) serves as cofactor. It depends on Mn(2+) as a cofactor.

The protein localises to the cytoplasm. It catalyses the reaction (2R,3S)-3-isopropylmalate + NAD(+) = 4-methyl-2-oxopentanoate + CO2 + NADH. It participates in amino-acid biosynthesis; L-leucine biosynthesis; L-leucine from 3-methyl-2-oxobutanoate: step 3/4. In terms of biological role, catalyzes the oxidation of 3-carboxy-2-hydroxy-4-methylpentanoate (3-isopropylmalate) to 3-carboxy-4-methyl-2-oxopentanoate. The product decarboxylates to 4-methyl-2 oxopentanoate. The protein is 3-isopropylmalate dehydrogenase of Ralstonia nicotianae (strain ATCC BAA-1114 / GMI1000) (Ralstonia solanacearum).